Consider the following 298-residue polypeptide: Nucleoid occlusion protein (298 aa).

The segment at residues 152-171 is a DNA-binding region (H-T-H motif); that stretch reads EALAQRLGKGQSTVANKLRL.

The protein belongs to the ParB family.

The protein resides in the cytoplasm. The protein localises to the nucleoid. Effects nucleoid occlusion by binding relatively nonspecifically to DNA and preventing the assembly of the division machinery in the vicinity of the nucleoid, especially under conditions that disturb the cell cycle. It helps to coordinate cell division and chromosome segregation by preventing the formation of the Z ring through the nucleoid, which would cause chromosome breakage. The protein is Nucleoid occlusion protein of Lysinibacillus sphaericus (strain C3-41).